We begin with the raw amino-acid sequence, 345 residues long: Biotin synthase (345 aa).

The Radical SAM core domain occupies 66 to 291; it reads PEVEIEGIIS…RTILRFAGGR (226 aa). Positions 81, 85, and 88 each coordinate [4Fe-4S] cluster. [2Fe-2S] cluster contacts are provided by cysteine 124, cysteine 157, cysteine 216, and arginine 286.

Belongs to the radical SAM superfamily. Biotin synthase family. As to quaternary structure, homodimer. Requires [4Fe-4S] cluster as cofactor. The cofactor is [2Fe-2S] cluster.

It catalyses the reaction (4R,5S)-dethiobiotin + (sulfur carrier)-SH + 2 reduced [2Fe-2S]-[ferredoxin] + 2 S-adenosyl-L-methionine = (sulfur carrier)-H + biotin + 2 5'-deoxyadenosine + 2 L-methionine + 2 oxidized [2Fe-2S]-[ferredoxin]. The protein operates within cofactor biosynthesis; biotin biosynthesis; biotin from 7,8-diaminononanoate: step 2/2. Functionally, catalyzes the conversion of dethiobiotin (DTB) to biotin by the insertion of a sulfur atom into dethiobiotin via a radical-based mechanism. In Mycobacterium leprae (strain Br4923), this protein is Biotin synthase.